A 142-amino-acid chain; its full sequence is Putative pre-16S rRNA nuclease (142 aa).

Belongs to the YqgF nuclease family.

The protein resides in the cytoplasm. Its function is as follows. Could be a nuclease involved in processing of the 5'-end of pre-16S rRNA. The protein is Putative pre-16S rRNA nuclease of Chlorobaculum tepidum (strain ATCC 49652 / DSM 12025 / NBRC 103806 / TLS) (Chlorobium tepidum).